Reading from the N-terminus, the 419-residue chain is Endothiapepsin (419 aa).

A signal peptide spans 1–20 (MSSPLKNALVTAMLAGGALS). Residues 21–89 (SPTKQHVGIP…QNSTSGLAER (69 aa)) constitute a propeptide, activation peptide. In terms of domain architecture, Peptidase A1 spans 106–417 (YITPVQIGTP…GATTPTLGFA (312 aa)). Catalysis depends on residues aspartate 124 and serine 288. Cysteine 344 and cysteine 379 are oxidised to a cystine.

Belongs to the peptidase A1 family.

The enzyme catalyses Hydrolysis of proteins with specificity similar to that of pepsin A, prefers hydrophobic residues at P1 and P1', but does not cleave 14-Ala-|-Leu-15 in the B chain of insulin or Z-Glu-Tyr. Clots milk.. The chain is Endothiapepsin (EAPA) from Cryphonectria parasitica (Chestnut blight fungus).